Here is a 404-residue protein sequence, read N- to C-terminus: MSKVQVKKVVVAYSGGLDTSVIIPWLKENYDCEVVAFVADVGQGDEELKGVEAKALSSGASECYIVDLKEEFVKEYIYPTLKTGAYYEGKYLLGTSMARPVIAKAQVEIARKVGADALAHGCTGKGNDQVRFEGAFAALAPDLHVIAPWREWDLRSREACLDYLAERNIPCAASLTKIYSRDANAWHVSTEGGVLESTWNAPNEDCWVWTVDPEQAPNEAEYVTLQVAHGEVVAVDGEAMTPYNALLYLNQKGAKHGVGRIDIVENRLVGMKSRGCYETPGGTIIMEALRAVEQLVLDKTSFEFREELGIKASHLVYDGRWFTPLRQAVFAAADELAKDVNGEVVIKLYKGQAVATQKRSANSLYSEDFATFGADEVYDHSHAGGFIRLYSLSSRIRALSQNKQ.

Residues 12 to 20 (AYSGGLDTS) and Ala39 each bind ATP. 2 residues coordinate L-citrulline: Tyr91 and Ser96. Gly121 serves as a coordination point for ATP. L-aspartate contacts are provided by Thr123, Asn127, and Asp128. Position 127 (Asn127) interacts with L-citrulline. Arg131, Ser180, Ser189, Glu265, and Tyr277 together coordinate L-citrulline.

It belongs to the argininosuccinate synthase family. Type 1 subfamily. Homotetramer.

It localises to the cytoplasm. The enzyme catalyses L-citrulline + L-aspartate + ATP = 2-(N(omega)-L-arginino)succinate + AMP + diphosphate + H(+). The protein operates within amino-acid biosynthesis; L-arginine biosynthesis; L-arginine from L-ornithine and carbamoyl phosphate: step 2/3. The polypeptide is Argininosuccinate synthase (Vibrio cholerae serotype O1 (strain ATCC 39541 / Classical Ogawa 395 / O395)).